A 248-amino-acid polypeptide reads, in one-letter code: Adenosylcobinamide-GDP ribazoletransferase (248 aa).

7 helical membrane passes run 24–44 (EINLKKGSALLPFVGVIIGAW), 70–90 (IIITGGFHVDALADTADGLFS), 106–126 (VGANGVIAICFYFLFYGALFL), 134–154 (IGWLFFVLPIVAKGVTMLLFA), 168–188 (IFLGVPWWPIVIAQVIVLVAL), 189–209 (GAFFSYIGVIAYAGVILFTII), and 228–248 (AGGQMGQLICLFCLVLLWGLI).

It belongs to the CobS family. Mg(2+) is required as a cofactor.

The protein resides in the cell membrane. It carries out the reaction alpha-ribazole + adenosylcob(III)inamide-GDP = adenosylcob(III)alamin + GMP + H(+). The enzyme catalyses alpha-ribazole 5'-phosphate + adenosylcob(III)inamide-GDP = adenosylcob(III)alamin 5'-phosphate + GMP + H(+). It participates in cofactor biosynthesis; adenosylcobalamin biosynthesis; adenosylcobalamin from cob(II)yrinate a,c-diamide: step 7/7. Functionally, joins adenosylcobinamide-GDP and alpha-ribazole to generate adenosylcobalamin (Ado-cobalamin). Also synthesizes adenosylcobalamin 5'-phosphate from adenosylcobinamide-GDP and alpha-ribazole 5'-phosphate. The chain is Adenosylcobinamide-GDP ribazoletransferase from Listeria monocytogenes serotype 4a (strain HCC23).